We begin with the raw amino-acid sequence, 365 residues long: Quinolone epoxide rearrangement protein asqO (365 aa).

Belongs to the quinolone epoxide rearrangement protein penF family.

It carries out the reaction (1'E,3'E)-5-(3,3-dimethyloxiran-2-yl)-3-methylhexa-1,3-dienyl-quinolinone B = aspoquinolone A. The enzyme catalyses (1'E,3'E)-5-(3,3-dimethyloxiran-2-yl)-3-methylhexa-1,3-dienyl-quinolinone B = aspoquinolone B. It functions in the pathway secondary metabolite biosynthesis. The protein operates within alkaloid biosynthesis. Its pathway is mycotoxin biosynthesis. In terms of biological role, quinolone epoxide rearrangement protein; part of the gene cluster that mediates the biosynthesis of the aspoquinolone mycotoxins. Within the pathway, asqO catalyzes an enzymatic 3-exo-tet cyclization to yield the cyclopropyl-THF ring system in aspoquinolone. The first step of the pathway is catalyzed by the nonribosomal peptide synthetase asqK that condenses anthranilic acid and O-methyl-L-tyrosine to produce 4'-methoxycyclopeptin. 4'-methoxycyclopeptin is then converted to 4'-methoxydehydrocyclopeptin by the ketoglutarate-dependent dioxygenase asqJ. AsqJ also converts its first product 4'-methoxydehydrocyclopeptin to 4'-methoxycyclopenin. The following conversion of 4'-methoxycyclopenin into 4'-methoxyviridicatin is catalyzed by the cyclopenase asqI. 4'-methoxyviridicatin is the precursor of quinolone natural products, and is further converted to quinolinone B. The prenyltransferase asqH1 then catalyzes the canonical Friedel-Crafts alkylation of quinolinone B with dimethylallyl cation to yield dimethylallyl quinolone, which is subjected to FAD-dependent dehydrogenation by the FAD-linked oxidoreductase asqF to yield conjugated aryl diene. The delta(3') double bond then serves as the site of the second alkylation with DMAPP catalyzed by the prenyltransferase asqH2 to yield a carbenium ion intermediate, which can be attacked by H(2)O to yield a styrenyl quinolone containing a C3'-hydroxyprenyl chain. The FAD-dependent monooxygenase asqG performs epoxidation of the terminal C7'-C8' olefin. Finally, after dehydratation of the epoxide at C3 by asqC, the quinolone epoxide rearrangement protein asqO catalyzes an enzymatic 3-exo-tet cyclization to yield the cyclopropyl-THF ring system in aspoquinolone. This Emericella nidulans (strain FGSC A4 / ATCC 38163 / CBS 112.46 / NRRL 194 / M139) (Aspergillus nidulans) protein is Quinolone epoxide rearrangement protein asqO.